A 272-amino-acid chain; its full sequence is Cytochrome c1 (272 aa).

A signal peptide spans 1–24 (MTTIVKRALVAAGMVLAIGGAAQA). Heme c contacts are provided by Cys61, Cys64, His65, and Met200. A helical transmembrane segment spans residues 244–261 (LGLKVLLFLGVLTAMLLA).

The main subunits of complex b-c1 are: cytochrome b, cytochrome c1 and the Rieske protein. Binds 1 heme c group covalently per subunit.

The protein resides in the cell membrane. Functionally, component of the ubiquinol-cytochrome c reductase complex (complex III or cytochrome b-c1 complex), which is a respiratory chain that generates an electrochemical potential coupled to ATP synthesis. The protein is Cytochrome c1 (petC) of Rhodospirillum rubrum.